The sequence spans 341 residues: Phosphoribosylformylglycinamidine cyclo-ligase (341 aa).

It belongs to the AIR synthase family.

It is found in the cytoplasm. The catalysed reaction is 2-formamido-N(1)-(5-O-phospho-beta-D-ribosyl)acetamidine + ATP = 5-amino-1-(5-phospho-beta-D-ribosyl)imidazole + ADP + phosphate + H(+). Its pathway is purine metabolism; IMP biosynthesis via de novo pathway; 5-amino-1-(5-phospho-D-ribosyl)imidazole from N(2)-formyl-N(1)-(5-phospho-D-ribosyl)glycinamide: step 2/2. The protein is Phosphoribosylformylglycinamidine cyclo-ligase of Lachnoclostridium phytofermentans (strain ATCC 700394 / DSM 18823 / ISDg) (Clostridium phytofermentans).